The primary structure comprises 123 residues: Glycophorin-B (123 aa).

Residues 1-19 (MYGKIIFVLLLSEIVSISA) form the signal peptide. A helical transmembrane segment spans residues 93-113 (VVIILIILCVMAGVIGTILLI).

It belongs to the glycophorin-A family. In terms of assembly, component of the ankyrin-1 complex in the erythrocyte, composed of ANK1, RHCE, RHAG, SLC4A1, EPB42, GYPA, GYPB and AQP1. Interacts (via the N-terminal) with RHAG; this interaction bridges the (RHAG)2(RHCE) heterotrimer with the SLC4A1 Band 3 I dimer complexed with GYPA. The N-terminal extracellular domain is heavily glycosylated on serine and threonine residues.

The protein resides in the cell membrane. In terms of biological role, component of the ankyrin-1 complex, a multiprotein complex involved in the stability and shape of the erythrocyte membrane. This Pan troglodytes (Chimpanzee) protein is Glycophorin-B.